The following is a 251-amino-acid chain: Flap endonuclease Xni (251 aa).

Mg(2+) is bound at residue Asp104. The 5'-3' exonuclease domain maps to 160–249; that stretch reads VTPEQLADYW…LDGNLQQLRL (90 aa). Leu171, Ala172, Pro180, Val182, and Ile185 together coordinate K(+). An interaction with DNA region spans residues 184-189; it reads GIGPKS.

The protein belongs to the Xni family. Mg(2+) serves as cofactor. The cofactor is K(+).

Its function is as follows. Has flap endonuclease activity. During DNA replication, flap endonucleases cleave the 5'-overhanging flap structure that is generated by displacement synthesis when DNA polymerase encounters the 5'-end of a downstream Okazaki fragment. In Klebsiella pneumoniae subsp. pneumoniae (strain ATCC 700721 / MGH 78578), this protein is Flap endonuclease Xni.